A 121-amino-acid polypeptide reads, in one-letter code: Basic phospholipase A2 CoaTx-II (121 aa).

Disulfide bonds link cysteine 26-cysteine 115, cysteine 28-cysteine 44, cysteine 43-cysteine 95, cysteine 49-cysteine 121, cysteine 50-cysteine 88, cysteine 57-cysteine 81, and cysteine 75-cysteine 86. The tract at residues 105 to 117 (KKYRIYPKFLCKK) is important for membrane-damaging activities in eukaryotes and bacteria; heparin-binding.

This sequence belongs to the phospholipase A2 family. Group II subfamily. K49 sub-subfamily. Homodimer; non-covalently-linked. Expressed by the venom gland.

The protein localises to the secreted. Its function is as follows. Snake venom phospholipase A2 (PLA2) that lacks enzymatic inactivity. It shows antibacterial activity against both Gram-negative and Gram-positive bacteria, including methicillin-resistant strains. In vivo, it causes local muscular damage, but no systemic damage (intravenous administration does not elevate plasma creatine kinase). Also causes an inflammatory activity that is demonstrated by mice paw edema induction and pro-inflammatory cytokine IL-6 elevation. A model of myotoxic mechanism has been proposed: an apo Lys49-PLA2 is activated by the entrance of a hydrophobic molecule (e.g. fatty acid) at the hydrophobic channel of the protein leading to a reorientation of a monomer. This reorientation causes a transition between 'inactive' to 'active' states, causing alignment of C-terminal and membrane-docking sites (MDoS) side-by-side and putting the membrane-disruption sites (MDiS) in the same plane, exposed to solvent and in a symmetric position for both monomers. The MDoS region stabilizes the toxin on membrane by the interaction of charged residues with phospholipid head groups. Subsequently, the MDiS region destabilizes the membrane with penetration of hydrophobic residues. This insertion causes a disorganization of the membrane, allowing an uncontrolled influx of ions (i.e. calcium and sodium), and eventually triggering irreversible intracellular alterations and cell death. This is Basic phospholipase A2 CoaTx-II from Crotalus lutosus abyssus (Grand Canyon rattlesnake).